The primary structure comprises 211 residues: Proteasome subunit beta (211 aa).

Positions 1-8 (MNQTLETG) are cleaved as a propeptide — removed in mature form; by autocatalysis. Threonine 9 functions as the Nucleophile in the catalytic mechanism.

This sequence belongs to the peptidase T1B family. The 20S proteasome core is composed of 14 alpha and 14 beta subunits that assemble into four stacked heptameric rings, resulting in a barrel-shaped structure. The two inner rings, each composed of seven catalytic beta subunits, are sandwiched by two outer rings, each composed of seven alpha subunits. The catalytic chamber with the active sites is on the inside of the barrel. Has a gated structure, the ends of the cylinder being occluded by the N-termini of the alpha-subunits. Is capped at one or both ends by the proteasome regulatory ATPase, PAN.

The protein resides in the cytoplasm. The catalysed reaction is Cleavage of peptide bonds with very broad specificity.. Its activity is regulated as follows. The formation of the proteasomal ATPase PAN-20S proteasome complex, via the docking of the C-termini of PAN into the intersubunit pockets in the alpha-rings, triggers opening of the gate for substrate entry. Interconversion between the open-gate and close-gate conformations leads to a dynamic regulation of the 20S proteasome proteolysis activity. In terms of biological role, component of the proteasome core, a large protease complex with broad specificity involved in protein degradation. The T.acidophilum proteasome is able to cleave oligopeptides after Tyr, Leu, Phe, and to a lesser extent after Glu and Arg. Thus, displays chymotrypsin-like activity and low level of caspase-like and trypsin-like activities. The polypeptide is Proteasome subunit beta (Thermoplasma acidophilum (strain ATCC 25905 / DSM 1728 / JCM 9062 / NBRC 15155 / AMRC-C165)).